The chain runs to 218 residues: Ribosomal RNA small subunit methyltransferase G (218 aa).

Residues G82, L87, 133 to 134, and R147 each bind S-adenosyl-L-methionine; that span reads VE.

Belongs to the methyltransferase superfamily. RNA methyltransferase RsmG family.

Its subcellular location is the cytoplasm. It carries out the reaction guanosine(527) in 16S rRNA + S-adenosyl-L-methionine = N(7)-methylguanosine(527) in 16S rRNA + S-adenosyl-L-homocysteine. Functionally, specifically methylates the N7 position of guanine in position 527 of 16S rRNA. This is Ribosomal RNA small subunit methyltransferase G from Leptothrix cholodnii (strain ATCC 51168 / LMG 8142 / SP-6) (Leptothrix discophora (strain SP-6)).